The sequence spans 258 residues: MTPPKLRASLSPSLLLLLSGCLLAAARREKGAASNVAEPVPGPTGGSSGRFLSPEQHACSWQLLLPAPEAAAGSELALRCQSPDGARHQCAYRGHPERCAAYAARRAHFWKQVLGGLRKKRRPCHDPAPLQARLCAGKKGHGAELRLVPRASPPARPTVAGFAGESKPRARNRGRTRERASGPAAGTPPPQSAPPKENPSERKTNEGKRKAALVPNEERPMGTGPDPDGLDGNAELTETYCAEKWHSLCNFFVNFWNG.

The first 26 residues, 1 to 26, serve as a signal peptide directing secretion; that stretch reads MTPPKLRASLSPSLLLLLSGCLLAAA. Cystine bridges form between Cys-59–Cys-80 and Cys-90–Cys-124. The segment at 146–231 is disordered; that stretch reads RLVPRASPPA…GTGPDPDGLD (86 aa). The segment covering 186–197 has biased composition (pro residues); sequence GTPPPQSAPPKE. Basic and acidic residues predominate over residues 198 to 209; that stretch reads NPSERKTNEGKR. A disulfide bond links Cys-241 and Cys-249.

The protein belongs to the fibroblast growth factor-binding protein family. As to quaternary structure, interacts with FGF2.

It is found in the secreted. Heparin-binding protein which binds to FGF2, prevents binding of FGF2 to heparin and probably inhibits immobilization of FGF2 on extracellular matrix glycosaminoglycans, allowing its release and subsequent activation of FGFR signaling which leads to increased vascular permeability. The sequence is that of Fibroblast growth factor-binding protein 3 (FGFBP3) from Homo sapiens (Human).